The sequence spans 234 residues: Large ribosomal subunit protein uL1 (234 aa).

Belongs to the universal ribosomal protein uL1 family. Part of the 50S ribosomal subunit.

Functionally, binds directly to 23S rRNA. The L1 stalk is quite mobile in the ribosome, and is involved in E site tRNA release. Its function is as follows. Protein L1 is also a translational repressor protein, it controls the translation of the L11 operon by binding to its mRNA. The protein is Large ribosomal subunit protein uL1 of Pectobacterium carotovorum subsp. carotovorum (strain PC1).